Consider the following 396-residue polypeptide: Na(+)/H(+) antiporter NhaA 2 (396 aa).

The next 11 membrane-spanning stretches (helical) occupy residues 17–37 (LSGLILFVVTVLAVTIANSDF), 62–82 (LLHWINDVLMAIFFLVVGLEI), 98–118 (SFPIIAAIGGMIVPAILYISL), 125–145 (GFGVPMATDIAFALGILMLLG), 154–174 (LFLVTLAVVDDLGAIVVVAIF), 179–199 (LHFEYFLYAFAVYSIIWFLNY), 209–229 (IILGVFLWIFIHKTGIHSTIA), 268–288 (FSAFIIMPLFAFANAGVIIDF), 296–316 (LIVLGVALGLIIGKPIGIFSF), 337–357 (IFAVGFLGGIGFTMSIFISHL), and 368–388 (VKLGIFASSVIAAIIGSVLLI).

This sequence belongs to the NhaA Na(+)/H(+) (TC 2.A.33) antiporter family.

Its subcellular location is the cell inner membrane. The catalysed reaction is Na(+)(in) + 2 H(+)(out) = Na(+)(out) + 2 H(+)(in). Its function is as follows. Na(+)/H(+) antiporter that extrudes sodium in exchange for external protons. The sequence is that of Na(+)/H(+) antiporter NhaA 2 from Aliarcobacter butzleri (strain RM4018) (Arcobacter butzleri).